Consider the following 118-residue polypeptide: Large ribosomal subunit protein bL20 (118 aa).

This sequence belongs to the bacterial ribosomal protein bL20 family.

Binds directly to 23S ribosomal RNA and is necessary for the in vitro assembly process of the 50S ribosomal subunit. It is not involved in the protein synthesizing functions of that subunit. This is Large ribosomal subunit protein bL20 from Thermotoga petrophila (strain ATCC BAA-488 / DSM 13995 / JCM 10881 / RKU-1).